The chain runs to 159 residues: Heterocyst differentiation protein HetP (159 aa).

The segment at Met-1–Tyr-50 is required to complement a hetP deletion.

This sequence belongs to the HetP family. In terms of assembly, in bacterial two-hybrid assays interacts weakly with Asl1930, Alr2902 and Alr3234.

Its function is as follows. Promotes heterocyst differentiation and commitment when nitrogen is limiting. Interplay between the 4 HetP paralogs controls the timing of commitment to heterocyst formation and its duration. Epistatic analysis show that the 3 paralogs act upstream of hetP to delay commitment (asl1930, alr3234) or inhibit development (alr2902). Asl1930 and Alr3234 must also attenuate the activity of Alr2902. Required for heterocyst formation. Functions directly downstream of master regulator HetR to promote heterocyst differentiation, functioning downstream of patterning (cell choice). Partially functionally redundant with homologs alr2902 and asl1930 but not alr3234. Overexpression leads to more than wild-type levels of heterocysts. Overexpression in the absence of hetR partially bypasses hetR deletion, allowing differentiation of heterocysts, although they only fix nitrogen in the absence of oxygen (a Fox- Fix+ phenotype), suggesting they are not fully. The chain is Heterocyst differentiation protein HetP from Nostoc sp. (strain PCC 7120 / SAG 25.82 / UTEX 2576).